The primary structure comprises 318 residues: Pantothenate synthetase (318 aa).

Residue 44–51 (MGALHQGH) coordinates ATP. Residue histidine 51 is the Proton donor of the active site. Glutamine 75 serves as a coordination point for (R)-pantoate. Glutamine 75 lines the beta-alanine pocket. 161–164 (GEKD) lines the ATP pocket. Glutamine 167 contacts (R)-pantoate. ATP is bound by residues valine 190 and 198–201 (LSSR). Residues 295–318 (DGHPNLDSQPEPAGTDPALLPPAR) form a disordered region.

Belongs to the pantothenate synthetase family. Homodimer.

It is found in the cytoplasm. It carries out the reaction (R)-pantoate + beta-alanine + ATP = (R)-pantothenate + AMP + diphosphate + H(+). It functions in the pathway cofactor biosynthesis; (R)-pantothenate biosynthesis; (R)-pantothenate from (R)-pantoate and beta-alanine: step 1/1. Its function is as follows. Catalyzes the condensation of pantoate with beta-alanine in an ATP-dependent reaction via a pantoyl-adenylate intermediate. This Nocardia farcinica (strain IFM 10152) protein is Pantothenate synthetase.